Here is a 317-residue protein sequence, read N- to C-terminus: Adenine deaminase (317 aa).

H14, H16, and H194 together coordinate Zn(2+). E197 acts as the Proton donor in catalysis. Residue D275 coordinates Zn(2+). D276 is a substrate binding site.

This sequence belongs to the metallo-dependent hydrolases superfamily. Adenosine and AMP deaminases family. Adenine deaminase type 2 subfamily. The cofactor is Zn(2+).

It carries out the reaction adenine + H2O + H(+) = hypoxanthine + NH4(+). Catalyzes the hydrolytic deamination of adenine to hypoxanthine. Plays an important role in the purine salvage pathway and in nitrogen catabolism. This is Adenine deaminase from Pseudomonas savastanoi pv. phaseolicola (strain 1448A / Race 6) (Pseudomonas syringae pv. phaseolicola (strain 1448A / Race 6)).